Here is an 886-residue protein sequence, read N- to C-terminus: Alanine--tRNA ligase (886 aa).

Positions 570, 574, 672, and 676 each coordinate Zn(2+).

It belongs to the class-II aminoacyl-tRNA synthetase family. It depends on Zn(2+) as a cofactor.

The protein localises to the cytoplasm. It carries out the reaction tRNA(Ala) + L-alanine + ATP = L-alanyl-tRNA(Ala) + AMP + diphosphate. In terms of biological role, catalyzes the attachment of alanine to tRNA(Ala) in a two-step reaction: alanine is first activated by ATP to form Ala-AMP and then transferred to the acceptor end of tRNA(Ala). Also edits incorrectly charged Ser-tRNA(Ala) and Gly-tRNA(Ala) via its editing domain. The chain is Alanine--tRNA ligase from Acidothermus cellulolyticus (strain ATCC 43068 / DSM 8971 / 11B).